Consider the following 249-residue polypeptide: 3-deoxy-D-manno-octulosonic acid kinase (249 aa).

Asp-175 is an active-site residue.

Belongs to the protein kinase superfamily. KdkA/RfaP family.

It localises to the cell inner membrane. It carries out the reaction an alpha-Kdo-(2-&gt;6)-lipid IVA + ATP = a 4-O-phospho-alpha-Kdo-(2-&gt;6)-lipid IVA + ADP + H(+). Its pathway is bacterial outer membrane biogenesis; LPS core biosynthesis. In terms of biological role, catalyzes the ATP-dependent phosphorylation of the 3-deoxy-D-manno-octulosonic acid (Kdo) residue in Kdo-lipid IV(A) at the 4-OH position. The sequence is that of 3-deoxy-D-manno-octulosonic acid kinase from Xylella fastidiosa (strain M23).